The following is a 95-amino-acid chain: Co-chaperonin GroES (95 aa).

It belongs to the GroES chaperonin family. In terms of assembly, heptamer of 7 subunits arranged in a ring. Interacts with the chaperonin GroEL.

Its subcellular location is the cytoplasm. Functionally, together with the chaperonin GroEL, plays an essential role in assisting protein folding. The GroEL-GroES system forms a nano-cage that allows encapsulation of the non-native substrate proteins and provides a physical environment optimized to promote and accelerate protein folding. GroES binds to the apical surface of the GroEL ring, thereby capping the opening of the GroEL channel. This is Co-chaperonin GroES from Staphylococcus haemolyticus (strain JCSC1435).